The following is a 317-amino-acid chain: Ornithine carbamoyltransferase (317 aa).

Residues 57-60 (STRT), Q84, R108, and 135-138 (HPCQ) each bind carbamoyl phosphate. L-ornithine is bound by residues N166, D230, and 234 to 235 (SM). Residues 270 to 271 (CL) and R298 each bind carbamoyl phosphate.

Belongs to the aspartate/ornithine carbamoyltransferase superfamily. OTCase family. As to quaternary structure, homododecamer.

It is found in the cytoplasm. It catalyses the reaction carbamoyl phosphate + L-ornithine = L-citrulline + phosphate + H(+). It functions in the pathway amino-acid biosynthesis; L-arginine biosynthesis; L-arginine from L-ornithine and carbamoyl phosphate: step 1/3. In terms of biological role, reversibly catalyzes the transfer of the carbamoyl group from carbamoyl phosphate (CP) to the N(epsilon) atom of ornithine (ORN) to produce L-citrulline. The protein is Ornithine carbamoyltransferase of Pyrococcus horikoshii (strain ATCC 700860 / DSM 12428 / JCM 9974 / NBRC 100139 / OT-3).